A 468-amino-acid polypeptide reads, in one-letter code: Methionine aminopeptidase 2 (468 aa).

Basic and acidic residues predominate over residues Ala-63–Gly-74. A disordered region spans residues Ala-63–Ala-87. Substrate is bound at residue His-219. Residues Asp-239, Asp-250, and His-319 each contribute to the a divalent metal cation site. Residue His-327 participates in substrate binding. A divalent metal cation contacts are provided by Glu-352 and Glu-449.

This sequence belongs to the peptidase M24A family. Methionine aminopeptidase eukaryotic type 2 subfamily. Co(2+) serves as cofactor. The cofactor is Zn(2+). Mn(2+) is required as a cofactor. It depends on Fe(2+) as a cofactor.

It localises to the cytoplasm. It carries out the reaction Release of N-terminal amino acids, preferentially methionine, from peptides and arylamides.. Its activity is regulated as follows. Inhibited by the fumagillin analog, TNP-470. Its function is as follows. Cotranslationally removes the N-terminal methionine from nascent proteins. The N-terminal methionine is often cleaved when the second residue in the primary sequence is small and uncharged (Met-Ala-, Cys, Gly, Pro, Ser, Thr, or Val). Required for germ cell proliferation and/or differentiation. The protein is Methionine aminopeptidase 2 of Caenorhabditis elegans.